Consider the following 325-residue polypeptide: ATP synthase gamma chain (325 aa).

Belongs to the ATPase gamma chain family. F-type ATPases have 2 components, CF(1) - the catalytic core - and CF(0) - the membrane proton channel. CF(1) has five subunits: alpha(3), beta(3), gamma(1), delta(1), epsilon(1). CF(0) has three main subunits: a, b and c.

Its subcellular location is the cell membrane. Produces ATP from ADP in the presence of a proton gradient across the membrane. The gamma chain is believed to be important in regulating ATPase activity and the flow of protons through the CF(0) complex. This Corynebacterium glutamicum (strain R) protein is ATP synthase gamma chain.